A 334-amino-acid polypeptide reads, in one-letter code: N-acetyl-gamma-glutamyl-phosphate reductase (334 aa).

Residue cysteine 154 is part of the active site.

The protein belongs to the NAGSA dehydrogenase family. Type 1 subfamily.

It is found in the cytoplasm. The catalysed reaction is N-acetyl-L-glutamate 5-semialdehyde + phosphate + NADP(+) = N-acetyl-L-glutamyl 5-phosphate + NADPH + H(+). The protein operates within amino-acid biosynthesis; L-arginine biosynthesis; N(2)-acetyl-L-ornithine from L-glutamate: step 3/4. Catalyzes the NADPH-dependent reduction of N-acetyl-5-glutamyl phosphate to yield N-acetyl-L-glutamate 5-semialdehyde. This is N-acetyl-gamma-glutamyl-phosphate reductase from Buchnera aphidicola subsp. Acyrthosiphon pisum (strain 5A).